Consider the following 484-residue polypeptide: Cathepsin F (484 aa).

A signal peptide spans Met-1–Ala-19. Residues Ala-20–Leu-270 constitute a propeptide, activation peptide. N-linked (GlcNAc...) asparagine glycans are attached at residues Asn-160 and Asn-195. 2 disulfides stabilise this stretch: Cys-292-Cys-333 and Cys-326-Cys-366. Cys-295 is an active-site residue. N-linked (GlcNAc...) asparagine glycans are attached at residues Asn-367 and Asn-378. Cys-424 and Cys-472 are disulfide-bonded. The active site involves His-431. Residue Asn-440 is glycosylated (N-linked (GlcNAc...) asparagine). The active site involves Asn-451.

The protein belongs to the peptidase C1 family. As to expression, high expression levels in heart, skeletal muscle, brain, testis and ovary; moderate levels in prostate, placenta, liver and colon; and no detectable expression in peripheral leukocytes and thymus.

Its subcellular location is the lysosome. It catalyses the reaction The recombinant enzyme cleaves synthetic substrates with Phe and Leu (better than Val) in P2, with high specificity constant (kcat/Km) comparable to that of cathepsin L.. Its function is as follows. Thiol protease which is believed to participate in intracellular degradation and turnover of proteins. Has also been implicated in tumor invasion and metastasis. In Homo sapiens (Human), this protein is Cathepsin F (CTSF).